Reading from the N-terminus, the 1625-residue chain is Nonribosomal peptide synthetase aclP (1625 aa).

A Carrier 1 domain is found at 47–123; that stretch reads TTMNPSSQLL…ALFTDLLSSE (77 aa). Serine 84 is modified (O-(pantetheine 4'-phosphoryl)serine). Positions 127–157 are disordered; it reads IPIPDPSDDSDDLSNPSSSTGGSPRVATPIS. Residues 286–567 form a condensation 1 region; that stretch reads ASSQSTVIWA…KYFQRALQLL (282 aa). The interval 614 to 997 is adenylation; sequence FESAVSRNPM…GRTDRQIKLR (384 aa). Residues 1096-1171 form the Carrier 2 domain; it reads SPMEKLVGDA…HLAAAIDSGL (76 aa). Serine 1131 carries the O-(pantetheine 4'-phosphoryl)serine modification. A condensation 2 region spans residues 1195 to 1585; sequence EWWHKYQINE…LQARIPLALS (391 aa).

This sequence belongs to the NRP synthetase family.

It functions in the pathway mycotoxin biosynthesis. Functionally, nonribosomal peptide synthetase; part of the gene cluster that mediates the biosynthesis of aspirochlorine (or antibiotic A30641), an unusual halogenated spiro compound with distinctive antifungal properties due to selective inhibition of protein biosynthesis, and which is also active against bacteria, viruses, and murine tumor cells. The non-ribosomal peptide synthetase (NRPS) aclP is responsible the formation of the diketopiperazine (DKP) core from the condensation of 2 phenylalanine residues. One Phe residue is tailored into chlorotyrosine by hydroxylation and chlorination, whereas the second Phe undergoes an unprecedented C-C bond cleavage to be converted into glycine. After formation of the DKP, sulfur is incorporated into the DKP by conjugation with glutathione by aclG, followed by its stepwise degradation to the thiol by aclI, aclJ and aclK, and the dithiol oxidation by aclT. In addition, oxygenases (aclB, aclC, aclL and aclO) and O-methyltransferases (aclM and aclU) act as tailoring enzymes to produce the intermediate dechloroaspirochlorine. Ultimately, chlorination of dechloroaspirochlorine by the halogenase aclH is the last step in the aspirochlorine pathway. This is Nonribosomal peptide synthetase aclP from Aspergillus oryzae (strain ATCC 42149 / RIB 40) (Yellow koji mold).